A 188-amino-acid chain; its full sequence is PRA1 family protein F3 (188 aa).

4 helical membrane passes run 74-94, 95-115, 123-143, and 145-165; these read IVVL…LIVF, TVLV…IKLF, TVLI…NATF, and IVGA…VRKT.

It belongs to the PRA1 family. In terms of assembly, interacts with PRA1F2 and PRA1D. Interacts with ACD11 and BPA1. Expressed in lateral roots, lateral root caps and columella cells.

The protein localises to the endoplasmic reticulum membrane. It is found in the membrane. The protein resides in the cytoplasm. Functionally, may be involved in both secretory and endocytic intracellular trafficking in the endosomal/prevacuolar compartments. This is PRA1 family protein F3 from Arabidopsis thaliana (Mouse-ear cress).